Consider the following 229-residue polypeptide: MSSETGPVAVDPTLRRRIEPHEFEVFFDPRELRKETCLLYEINWGGRHSVWRHTSQNTSNHVEVNFLEKFTTERYFRPNTRCSITWFLSWSPCGECSRAITEFLSRHPYVTLFIYIARLYHHTDQRNRQGLRDLISSGVTIQIMTEQEYCYCWRNFVNYPPSNEAYWPRYPHLWVKLYVLELYCIILGLPPCLKILRRKQPQLTFFTITLQTCHYQRIPPHLLWATGLK.

The CMP/dCMP-type deaminase domain occupies Val10 to Leu134. His61 is a Zn(2+) binding site. The Proton donor role is filled by Glu63. Zn(2+) is bound by residues Cys93 and Cys96.

This sequence belongs to the cytidine and deoxycytidylate deaminase family. Homodimer. Interacts with A1CF; form an mRNA editing complex. Interacts with RBM47; form an mRNA editing complex. Found in a complex with CELF2/CUGBP2 and A1CF. Interacts with HNRPAB. Interacts with SYNCRIP. Requires Zn(2+) as cofactor. In terms of tissue distribution, expressed in the spleen. Expressed at lower level in the kidney, testis, lung, brain and liver.

The protein localises to the cytoplasm. It is found in the nucleus. It catalyses the reaction a cytidine in mRNA + H2O + H(+) = a uridine in mRNA + NH4(+). The catalysed reaction is cytidine(6666) in apoB mRNA + H2O + H(+) = uridine(6666) in apoB mRNA + NH4(+). Its function is as follows. Cytidine deaminase catalyzing the cytidine to uridine postranscriptional editing of a variety of mRNAs. Form complexes with cofactors that confer differential editing activity and selectivity. Responsible for the postranscriptional editing of a CAA codon for Gln to a UAA codon for stop in the apolipoprotein B mRNA. Also involved in CGA (Arg) to UGA (Stop) editing in the NF1 mRNA. May also play a role in the epigenetic regulation of gene expression by participating in DNA demethylation. This chain is C-&gt;U-editing enzyme APOBEC-1, found in Mus musculus (Mouse).